We begin with the raw amino-acid sequence, 274 residues long: MDVYGLIGNPVGHSLSPPMHEAGYGTLGIDARYVTFEPAPDDAVAAIGGAGALGVAGLNVTVPFKQDALDAVDPAPLAERIGAVNTVDFGPLRAGDADRPRGHNTDAAGVKRAFSHHDIELAGRDAVVVGAGGAGRAAAFALADAGATVHVANRTAERAVDLADAVPGATGGGLDDLGDRIAGADVLVNATSVGMDEPEATPVPADHLHGDLAVLDAVYAPIETRLLREAAAAGATTIDGAWMLLFQGVEAFEIWTGADAPVEAMNAALRAELE.

Shikimate is bound by residues 14–16 and threonine 61; that span reads SLS. Lysine 65 serves as the catalytic Proton acceptor. Positions 85 and 106 each coordinate shikimate. NADP(+) is bound by residues 130–134, 153–158, and alanine 217; these read GAGGA and NRTAER. Residue tyrosine 219 participates in shikimate binding. Residue glycine 240 participates in NADP(+) binding.

The protein belongs to the shikimate dehydrogenase family. In terms of assembly, homodimer.

The enzyme catalyses shikimate + NADP(+) = 3-dehydroshikimate + NADPH + H(+). It participates in metabolic intermediate biosynthesis; chorismate biosynthesis; chorismate from D-erythrose 4-phosphate and phosphoenolpyruvate: step 4/7. Functionally, involved in the biosynthesis of the chorismate, which leads to the biosynthesis of aromatic amino acids. Catalyzes the reversible NADPH linked reduction of 3-dehydroshikimate (DHSA) to yield shikimate (SA). In Halorubrum lacusprofundi (strain ATCC 49239 / DSM 5036 / JCM 8891 / ACAM 34), this protein is Shikimate dehydrogenase (NADP(+)).